A 381-amino-acid polypeptide reads, in one-letter code: Cytochrome b (381 aa).

Transmembrane regions (helical) follow at residues 34-54 (FGSL…FLAM), 78-99 (WLMR…YLHI), 114-134 (WNIG…GYVL), and 179-199 (FFAF…IHIL). Residues His84 and His98 each coordinate heme b. Heme b contacts are provided by His183 and His197. His202 contacts a ubiquinone. A run of 4 helical transmembrane segments spans residues 227-247 (YKDL…ALFM), 289-309 (LGGV…PLLH), 321-341 (LTQI…WIGG), and 348-368 (FIMV…FVIP).

It belongs to the cytochrome b family. The cytochrome bc1 complex contains 3 respiratory subunits (MT-CYB, CYC1 and UQCRFS1), 2 core proteins (UQCRC1 and UQCRC2) and probably 6 low-molecular weight proteins. The cofactor is heme b.

The protein resides in the mitochondrion inner membrane. Functionally, component of the ubiquinol-cytochrome c reductase complex (complex III or cytochrome b-c1 complex) that is part of the mitochondrial respiratory chain. The b-c1 complex mediates electron transfer from ubiquinol to cytochrome c. Contributes to the generation of a proton gradient across the mitochondrial membrane that is then used for ATP synthesis. The polypeptide is Cytochrome b (mt-cyb) (Scyliorhinus canicula (Small-spotted catshark)).